The primary structure comprises 349 residues: MELELSLGDSPAPVKATIAPTPVLIPTCMGDEEDLELVLGVRATRRDEQDDQTTCTQSSEEAMEGEEDETRPHGEAPVESLSFPLFVSSAETGSANSEMCTRGFDVNTRPADGGAEAGRPSSPSSMQEASTRQQVADQEAADDEDNGGGGARKKLRLSKEQSSFLEDSFKEHSTLTPKQKSDLANRLNLRPRQVEVWFQNRRARTKLKQTEVDCEHLKRCCERLTRENRRLQREVAELRGTLRTTTSSYPPLYGLHHLPAAAGTVFRVCPSCEHSKVVAAAASESFSPRVFAGGGAPAAITAAAAVPSPGAGSPPSSSAALFGARRPHFGPFAAAVIPPVLRRQPSATS.

A disordered region spans residues 42 to 186; it reads RATRRDEQDD…PKQKSDLANR (145 aa). Polar residues-rich tracts occupy residues 89-99 and 121-135; these read SAETGSANSEM and SSPS…RQQV. A DNA-binding region (homeobox) is located at residues 150–209; sequence GARKKLRLSKEQSSFLEDSFKEHSTLTPKQKSDLANRLNLRPRQVEVWFQNRRARTKLKQ. Residues 167 to 183 show a composition bias toward basic and acidic residues; that stretch reads DSFKEHSTLTPKQKSDL. Positions 208–252 are leucine-zipper; that stretch reads KQTEVDCEHLKRCCERLTRENRRLQREVAELRGTLRTTTSSYPPL.

It belongs to the HD-ZIP homeobox family. Class II subfamily. As to quaternary structure, homodimer. May form a heterodimer with HOX1, HOX2 or HOX3. Expressed in seedlings, roots, leaves, nodes, internodes, flowers and embryo.

It localises to the nucleus. Functionally, probable transcription factor that binds to the DNA sequence 5'-CAAT[GC]ATTG-3'. The polypeptide is Homeobox-leucine zipper protein HOX7 (HOX7) (Oryza sativa subsp. japonica (Rice)).